A 315-amino-acid polypeptide reads, in one-letter code: Methionyl-tRNA formyltransferase (315 aa).

111–114 (SLLP) contributes to the (6S)-5,6,7,8-tetrahydrofolate binding site.

It belongs to the Fmt family.

The catalysed reaction is L-methionyl-tRNA(fMet) + (6R)-10-formyltetrahydrofolate = N-formyl-L-methionyl-tRNA(fMet) + (6S)-5,6,7,8-tetrahydrofolate + H(+). Its function is as follows. Attaches a formyl group to the free amino group of methionyl-tRNA(fMet). The formyl group appears to play a dual role in the initiator identity of N-formylmethionyl-tRNA by promoting its recognition by IF2 and preventing the misappropriation of this tRNA by the elongation apparatus. This chain is Methionyl-tRNA formyltransferase, found in Chlorobium phaeobacteroides (strain DSM 266 / SMG 266 / 2430).